Consider the following 904-residue polypeptide: DNA mismatch repair protein MutS (904 aa).

638-645 (GPNMAGKS) lines the ATP pocket. The interval 825-869 (KSKADGTRRPASYHEAQPLLPGMPEPPSTASAEPPQTVTPPEPPV) is disordered.

It belongs to the DNA mismatch repair MutS family.

Functionally, this protein is involved in the repair of mismatches in DNA. It is possible that it carries out the mismatch recognition step. This protein has a weak ATPase activity. This is DNA mismatch repair protein MutS from Oleidesulfovibrio alaskensis (strain ATCC BAA-1058 / DSM 17464 / G20) (Desulfovibrio alaskensis).